We begin with the raw amino-acid sequence, 49 residues long: Small ribosomal subunit protein eS31 (49 aa).

Zn(2+)-binding residues include Cys21, Cys24, Cys39, and Cys42. A C4-type zinc finger spans residues 21–42; sequence CPRCGPGTFLADHKNRLTCGKC.

The protein belongs to the eukaryotic ribosomal protein eS31 family. Part of the 30S ribosomal subunit. Requires Zn(2+) as cofactor.

In Methanosarcina barkeri (strain Fusaro / DSM 804), this protein is Small ribosomal subunit protein eS31.